The chain runs to 419 residues: Adenylosuccinate synthetase (419 aa).

GTP is bound by residues Gly12–Lys18 and Gly40–Thr42. Asp13 serves as the catalytic Proton acceptor. Residues Asp13 and Gly40 each coordinate Mg(2+). Residues Asp13–Lys16, Asn38–His41, Thr128, Arg142, Gln220, Thr235, and Arg299 each bind IMP. Residue His41 is the Proton donor of the active site. A substrate-binding site is contributed by Ser295–Arg301. Residues Arg301, Lys327–Asp329, and Ser407–Gly409 each bind GTP.

Belongs to the adenylosuccinate synthetase family. As to quaternary structure, homodimer. The cofactor is Mg(2+).

The protein resides in the cytoplasm. It catalyses the reaction IMP + L-aspartate + GTP = N(6)-(1,2-dicarboxyethyl)-AMP + GDP + phosphate + 2 H(+). Its pathway is purine metabolism; AMP biosynthesis via de novo pathway; AMP from IMP: step 1/2. Its function is as follows. Plays an important role in the de novo pathway of purine nucleotide biosynthesis. Catalyzes the first committed step in the biosynthesis of AMP from IMP. The chain is Adenylosuccinate synthetase from Azobacteroides pseudotrichonymphae genomovar. CFP2.